Reading from the N-terminus, the 237-residue chain is Ribonuclease PH (237 aa).

Residues Arg-86 and 124–126 (GTR) each bind phosphate.

It belongs to the RNase PH family. Homohexameric ring arranged as a trimer of dimers.

The catalysed reaction is tRNA(n+1) + phosphate = tRNA(n) + a ribonucleoside 5'-diphosphate. Phosphorolytic 3'-5' exoribonuclease that plays an important role in tRNA 3'-end maturation. Removes nucleotide residues following the 3'-CCA terminus of tRNAs; can also add nucleotides to the ends of RNA molecules by using nucleoside diphosphates as substrates, but this may not be physiologically important. Probably plays a role in initiation of 16S rRNA degradation (leading to ribosome degradation) during starvation. The protein is Ribonuclease PH of Methylobacterium nodulans (strain LMG 21967 / CNCM I-2342 / ORS 2060).